Reading from the N-terminus, the 1382-residue chain is Histone-lysine N-methyltransferase SUVR5 (1382 aa).

2 disordered regions span residues 43 to 62 and 354 to 373; these read TVTG…SEPK and GNTN…NTPE. 3 consecutive C2H2-type zinc fingers follow at residues 735–758, 769–792, and 838–861; these read FACA…EERH, LQCI…QAVH, and FVCK…QAEH. The disordered stretch occupies residues 915 to 935; sequence RRMQGSKSLGTEGNTEAGVSP. Positions 919 to 928 are enriched in polar residues; the sequence is GSKSLGTEGN. In terms of domain architecture, Pre-SET spans 1145-1221; that stretch reads LRCSCRSSVC…TCQNRVLQNG (77 aa). C1147, C1149, C1154, C1159, C1182, C1203, C1207, C1209, and C1213 together coordinate Zn(2+). In terms of domain architecture, SET spans 1224-1356; sequence AKLEVFRTES…AGEEITRDYG (133 aa). S-adenosyl-L-methionine-binding positions include 1234-1236, Y1277, and 1313-1314; these read KGW and NH. C1316 contacts Zn(2+). Y1355 lines the S-adenosyl-L-methionine pocket. Positions 1366 to 1382 constitute a Post-SET domain; sequence NEHPCHCKATNCRGLLS. 3 residues coordinate Zn(2+): C1370, C1372, and C1377.

Belongs to the class V-like SAM-binding methyltransferase superfamily. In terms of assembly, component of a regulatory complex with LDL1/SWP1. Interacts with LDL1/SWP1.

Its subcellular location is the nucleus. The protein localises to the chromosome. The catalysed reaction is L-lysyl-[histone] + S-adenosyl-L-methionine = N(6)-methyl-L-lysyl-[histone] + S-adenosyl-L-homocysteine + H(+). In terms of biological role, histone methyltransferase that functions together with its binding partner LDL1/SWP1 as one of the regulators of flower timing in Arabidopsis. Mediates H3K9me2 deposition and regulates gene expression in a DNA methylation-independent manner. Binds DNA through its zinc fingers and represses the expression of a subset of stimulus response genes. May represent a novel mechanism for plants to regulate their chromatin and transcriptional state, which may allow for the adaptability and modulation necessary to rapidly respond to environment or developmental cues. The polypeptide is Histone-lysine N-methyltransferase SUVR5 (Arabidopsis thaliana (Mouse-ear cress)).